A 298-amino-acid polypeptide reads, in one-letter code: Foldase protein PrsA 1 (298 aa).

The first 23 residues, 1–23 (MNKTWKKAATVLAFAGIALSATA), serve as a signal peptide directing secretion. A lipid anchor (N-palmitoyl cysteine) is attached at Cys24. Cys24 carries S-diacylglycerol cysteine lipidation. The PpiC domain maps to 141-234 (QPEVTVQHIL…YGYHVIKMIK (94 aa)).

It belongs to the PrsA family.

The protein resides in the cell membrane. The catalysed reaction is [protein]-peptidylproline (omega=180) = [protein]-peptidylproline (omega=0). Plays a major role in protein secretion by helping the post-translocational extracellular folding of several secreted proteins. This is Foldase protein PrsA 1 (prsA1) from Lactobacillus johnsonii (strain CNCM I-12250 / La1 / NCC 533).